Here is a 297-residue protein sequence, read N- to C-terminus: MFSRAGVAGLSAWTLQPQWIQVRNMATLKDITRRLKSIKNIQKITKSMKMVAAAKYARAERELKPARIYGLGSLALYEKADIKGPEDKKKHLLIGVSSDRGLCGAIHSSIAKQMKSEVATLTAAGKEVMLVGVGDKIRGILYRTHSDQFLVAFKEVGRKPPTFGDASVIALELLNSGYEFDEGSIIFNKFRSVISYKTEEKPIFSLNTVASADSMSIYDDIDADVLQNYQEYNLANIIYYSLKESTTSEQSARMTAMDNASKNASEMIDKLTLTFNRTRQAVITKELIEIISGAAAL.

A mitochondrion-targeting transit peptide spans 1-25 (MFSRAGVAGLSAWTLQPQWIQVRNM). Lys39 carries the post-translational modification N6-acetyllysine. The residue at position 49 (Lys49) is an N6-succinyllysine. Lys55 bears the N6-acetyllysine mark. Lys115 is subject to N6-acetyllysine; alternate. The residue at position 115 (Lys115) is an N6-succinyllysine; alternate. At Ser146 the chain carries Phosphoserine. At Lys154 the chain carries N6-acetyllysine; alternate. Residue Lys154 is modified to N6-succinyllysine; alternate. Lys197 carries the post-translational modification N6-acetyllysine. Lys270 is modified (N6-succinyllysine).

This sequence belongs to the ATPase gamma chain family. In terms of assembly, component of the ATP synthase complex composed at least of ATP5F1A/subunit alpha, ATP5F1B/subunit beta, ATP5MC1/subunit c (homooctomer), MT-ATP6/subunit a, MT-ATP8/subunit 8, ATP5ME/subunit e, ATP5MF/subunit f, ATP5MG/subunit g, ATP5MK/subunit k, ATP5MJ/subunit j, ATP5F1C/subunit gamma, ATP5F1D/subunit delta, ATP5F1E/subunit epsilon, ATP5PF/subunit F6, ATP5PB/subunit b, ATP5PD/subunit d, ATP5PO/subunit OSCP. ATP synthase complex consists of a soluble F(1) head domain (subunits alpha(3) and beta(3)) - the catalytic core - and a membrane F(0) domain - the membrane proton channel (subunits c, a, 8, e, f, g, k and j). These two domains are linked by a central stalk (subunits gamma, delta, and epsilon) rotating inside the F1 region and a stationary peripheral stalk (subunits F6, b, d, and OSCP). Interacts with FLVCR2; this interaction occurs in the absence of heme and is disrupted upon heme binding.

The protein resides in the mitochondrion inner membrane. In terms of biological role, subunit gamma, of the mitochondrial membrane ATP synthase complex (F(1)F(0) ATP synthase or Complex V) that produces ATP from ADP in the presence of a proton gradient across the membrane which is generated by electron transport complexes of the respiratory chain. ATP synthase complex consist of a soluble F(1) head domain - the catalytic core - and a membrane F(1) domain - the membrane proton channel. These two domains are linked by a central stalk rotating inside the F(1) region and a stationary peripheral stalk. During catalysis, ATP synthesis in the catalytic domain of F(1) is coupled via a rotary mechanism of the central stalk subunits to proton translocation. In vivo, can only synthesize ATP although its ATP hydrolase activity can be activated artificially in vitro. With the central stalk subunit delta, is essential for the biogenesis of F(1) catalytic part of the ATP synthase complex namely in the formation of F1 assembly intermediate. This chain is ATP synthase F(1) complex subunit gamma, mitochondrial, found in Pongo abelii (Sumatran orangutan).